The sequence spans 591 residues: L-fucose isomerase (591 aa).

Active-site proton acceptor residues include E338 and D362. Residues E338, D362, and H529 each contribute to the Mn(2+) site.

The protein belongs to the L-fucose isomerase family. Mn(2+) is required as a cofactor.

It is found in the cytoplasm. It catalyses the reaction L-fucose = L-fuculose. It participates in carbohydrate degradation; L-fucose degradation; L-lactaldehyde and glycerone phosphate from L-fucose: step 1/3. Functionally, converts the aldose L-fucose into the corresponding ketose L-fuculose. In Phocaeicola vulgatus (strain ATCC 8482 / DSM 1447 / JCM 5826 / CCUG 4940 / NBRC 14291 / NCTC 11154) (Bacteroides vulgatus), this protein is L-fucose isomerase.